We begin with the raw amino-acid sequence, 544 residues long: Bacillolysin (544 aa).

A signal peptide spans 1 to 25 (MNKRAMLGAIGLAFGLMAWPFGASA). Positions 26 to 225 (KGKSMVWNEQ…DEAKPGGAQP (200 aa)) are cleaved as a propeptide — activation peptide. Ca(2+)-binding residues include Asp-285, Asp-287, Gln-289, and Asp-366. His-370 is a Zn(2+) binding site. The active site involves Glu-371. Positions 374 and 394 each coordinate Zn(2+). Residues Glu-405, Asn-411, Asp-413, Glu-415, Glu-418, Tyr-421, Thr-422, Val-425, and Asp-428 each contribute to the Ca(2+) site. His-459 functions as the Proton donor in the catalytic mechanism.

The protein belongs to the peptidase M4 family. It depends on Ca(2+) as a cofactor. Zn(2+) is required as a cofactor.

The protein resides in the secreted. It carries out the reaction Similar, but not identical, to that of thermolysin.. Extracellular zinc metalloprotease. The protein is Bacillolysin (npr) of Bacillus caldolyticus.